A 377-amino-acid polypeptide reads, in one-letter code: Anhydro-N-acetylmuramic acid kinase (377 aa).

12–19 (GTSLDGID) provides a ligand contact to ATP.

Belongs to the anhydro-N-acetylmuramic acid kinase family.

The enzyme catalyses 1,6-anhydro-N-acetyl-beta-muramate + ATP + H2O = N-acetyl-D-muramate 6-phosphate + ADP + H(+). It functions in the pathway amino-sugar metabolism; 1,6-anhydro-N-acetylmuramate degradation. It participates in cell wall biogenesis; peptidoglycan recycling. Catalyzes the specific phosphorylation of 1,6-anhydro-N-acetylmuramic acid (anhMurNAc) with the simultaneous cleavage of the 1,6-anhydro ring, generating MurNAc-6-P. Is required for the utilization of anhMurNAc either imported from the medium or derived from its own cell wall murein, and thus plays a role in cell wall recycling. The sequence is that of Anhydro-N-acetylmuramic acid kinase from Methylorubrum populi (strain ATCC BAA-705 / NCIMB 13946 / BJ001) (Methylobacterium populi).